The primary structure comprises 819 residues: MSKPLPSALNPLAKALLIRHSLRPRHALSRIGMGLALSSALVFQVQAQEWTLDIPAQSMNSALQALAKQTDTQLLYSPEDIGGLRSSALKGRHDLQSSLRILLQGTGLRYQIDGNTVTVTASAAAKDGQIELSATNVNSAGLGETTEGTGSYTTRVTSTATKMNLSIRETPQTITVVTRQRMDDQHLGSMNEVLTQTPGITMSQDGGERFNIYSRGSAINIYQFDGVTTYQDNQTRNMPSTLMDVGLYDRIEIVRGATGLMTGAGDPSAVVNVIRKRPTREFKSHIQAGVGSWDYYRAEADVSGPLTDDGRVRGRFFAAKQDNHTFMDWYTQDRDVLYGVVEADVTDTTVARFGIDRQTYKVNGAPGVPIIYTNGQPTNFSRSTSSDARWGYDDYTTTNYTFGLEQQLAHDWQFKLAAAYMDVDRDSFSSYYSTTTNRSYLELDGSTEISAGIVTAKQHQKGVDATLQGPFQLLGQTHELIVGYNYLEYENKHRGDSGPDVNINFYDWDNQTPKPGDDEIIPGIQYNISNRQSGYFVASRFNLTDDLHLILGARASNYRFDYALWRIGNEPAPYKMVERGVVTPYAGIVYDLTNEQSVYASYTDIFKPQNNVDITGKPLDPEVGKNYELGWKGEFLEGRLNANIALYMVKRDNLAESTNEVVPDSGGLIASRAVDGAETKGVDVELSGEVLPGWNVFTGYSHTRTEDADGKRLTPQLPMDTFRFWNTYRLPGEWEKLTLGGGVNWNSKSTLNFARYNSHVTQDDYFVTSLMARYRINESLAATLNVNNIFDKKYYAGMAGSYGHYGAPRNATVTLRYDF.

The signal sequence occupies residues 1 to 47 (MSKPLPSALNPLAKALLIRHSLRPRHALSRIGMGLALSSALVFQVQA). A TonB box motif is present at residues 115–122 (NTVTVTAS). The 111-residue stretch at 166–276 (SIRETPQTIT…PSAVVNVIRK (111 aa)) folds into the TBDR plug domain. In terms of domain architecture, TBDR beta-barrel spans 281-819 (EFKSHIQAGV…NATVTLRYDF (539 aa)). A TonB C-terminal box motif is present at residues 802–819 (YGHYGAPRNATVTLRYDF).

This sequence belongs to the TonB-dependent receptor family.

Its subcellular location is the cell outer membrane. Functionally, specific receptor for the siderophore ferric pyoverdine (pseudobactin) 358. The protein is Ferric-pyoverdine 358 receptor (pupA) of Pseudomonas putida (Arthrobacter siderocapsulatus).